We begin with the raw amino-acid sequence, 394 residues long: HORMA domain-containing protein 1 (394 aa).

Positions 24 to 226 (QQSLVLVKRL…TPFHTFKVKV (203 aa)) constitute an HORMA domain. The segment at 306–394 (KESPELSISH…RKFSEPKEHI (89 aa)) is disordered. Polar residues predominate over residues 311–325 (LSISHSQVEQLVSKT). Over residues 353–362 (KSKESRKRSQ) the composition is skewed to basic and acidic residues. S376 bears the Phosphoserine mark. The short motif at 383 to 386 (KRRK) is the Nuclear localization signal element.

As to quaternary structure, interacts with HORMAD2. Interacts with IHO1. In terms of processing, phosphorylated at Ser-377 in a SPO11-dependent manner.

The protein localises to the nucleus. It localises to the chromosome. Functionally, plays a key role in meiotic progression. Regulates 3 different functions during meiosis: ensures that sufficient numbers of processed DNA double-strand breaks (DSBs) are available for successful homology search by increasing the steady-state numbers of single-stranded DSB ends. Promotes synaptonemal-complex formation independently of its role in homology search. Plays a key role in the male mid-pachytene checkpoint and the female meiotic prophase checkpoint: required for efficient build-up of ATR activity on unsynapsed chromosome regions, a process believed to form the basis of meiotic silencing of unsynapsed chromatin (MSUC) and meiotic prophase quality control in both sexes. This chain is HORMA domain-containing protein 1 (HORMAD1), found in Sus scrofa (Pig).